Consider the following 336-residue polypeptide: Nuclear envelope-associated protein 1 (336 aa).

A coiled-coil region spans residues 125-261 (CSMLKQQLDD…RRTDQDLKKK (137 aa)). Positions 240 to 261 (KTKELESQLEKQRRTDQDLKKK) match the Bipartite nuclear localization signal motif. The helical transmembrane segment at 313 to 330 (FWDNSGFKIVVSMSMLML) threads the bilayer.

Forms heteromers with NEAP2 and NEAP3. Interacts with SUN1; SUN2 and bZIP18.

It localises to the nucleus inner membrane. The protein resides in the nucleus. The protein localises to the nucleoplasm. In Arabidopsis thaliana (Mouse-ear cress), this protein is Nuclear envelope-associated protein 1.